A 127-amino-acid polypeptide reads, in one-letter code: DNA-directed RNA polymerase subunit omega (127 aa).

The protein belongs to the RNA polymerase subunit omega family. As to quaternary structure, the RNAP catalytic core consists of 2 alpha, 1 beta, 1 beta' and 1 omega subunit. When a sigma factor is associated with the core the holoenzyme is formed, which can initiate transcription.

It carries out the reaction RNA(n) + a ribonucleoside 5'-triphosphate = RNA(n+1) + diphosphate. Functionally, promotes RNA polymerase assembly. Latches the N- and C-terminal regions of the beta' subunit thereby facilitating its interaction with the beta and alpha subunits. This is DNA-directed RNA polymerase subunit omega from Rickettsia canadensis (strain McKiel).